Reading from the N-terminus, the 100-residue chain is MTPWYLYLIRTADNALYTGITTDVARRYRQHQTGKGAKALRGKGELTLAFAAQVGDRSLALRIEYRIKQLTKRQKERLVTEQEAFESLLSSLQTPVLKND.

The GIY-YIG domain occupies 2 to 77 (TPWYLYLIRT…KQLTKRQKER (76 aa)).

Belongs to the UPF0213 family.

This Salmonella arizonae (strain ATCC BAA-731 / CDC346-86 / RSK2980) protein is UPF0213 protein YhbQ.